The primary structure comprises 483 residues: Aspartyl/glutamyl-tRNA(Asn/Gln) amidotransferase subunit B (483 aa).

The protein belongs to the GatB/GatE family. GatB subfamily. In terms of assembly, heterotrimer of A, B and C subunits.

The catalysed reaction is L-glutamyl-tRNA(Gln) + L-glutamine + ATP + H2O = L-glutaminyl-tRNA(Gln) + L-glutamate + ADP + phosphate + H(+). It catalyses the reaction L-aspartyl-tRNA(Asn) + L-glutamine + ATP + H2O = L-asparaginyl-tRNA(Asn) + L-glutamate + ADP + phosphate + 2 H(+). In terms of biological role, allows the formation of correctly charged Asn-tRNA(Asn) or Gln-tRNA(Gln) through the transamidation of misacylated Asp-tRNA(Asn) or Glu-tRNA(Gln) in organisms which lack either or both of asparaginyl-tRNA or glutaminyl-tRNA synthetases. The reaction takes place in the presence of glutamine and ATP through an activated phospho-Asp-tRNA(Asn) or phospho-Glu-tRNA(Gln). The polypeptide is Aspartyl/glutamyl-tRNA(Asn/Gln) amidotransferase subunit B (Rickettsia felis (strain ATCC VR-1525 / URRWXCal2) (Rickettsia azadi)).